The following is a 342-amino-acid chain: WW domain binding protein 1-like (342 aa).

A helical transmembrane segment spans residues 42 to 62 (LWWFWLVWTIIIILSCCCVCH). Disordered stretches follow at residues 133 to 247 (LPPQ…RRFT) and 292 to 320 (PGDE…RPPA). The segment covering 158–173 (SSPLSEPSRSSTRPPS) has biased composition (low complexity). At Ser173 the chain carries Phosphoserine. Positions 212–240 (LDKDAECREELLKDDSSEHGAPDSKEKTP) are enriched in basic and acidic residues.

The protein resides in the membrane. This is WW domain binding protein 1-like (WBP1L) from Homo sapiens (Human).